Here is an 861-residue protein sequence, read N- to C-terminus: Probable beta-glucosidase A (861 aa).

The N-terminal stretch at 1–19 (MKLSILEAAALTAASVVSA) is a signal peptide. Residues N62, N212, and N253 are each glycosylated (N-linked (GlcNAc...) asparagine). Residue D281 is part of the active site. 8 N-linked (GlcNAc...) asparagine glycosylation sites follow: N316, N323, N355, N524, N543, N565, N669, and N713. The tract at residues 735–754 (PEGATDGSPQPRLPASGGPG) is disordered.

This sequence belongs to the glycosyl hydrolase 3 family.

The protein localises to the secreted. The catalysed reaction is Hydrolysis of terminal, non-reducing beta-D-glucosyl residues with release of beta-D-glucose.. Its pathway is glycan metabolism; cellulose degradation. Its function is as follows. Beta-glucosidases are one of a number of cellulolytic enzymes involved in the degradation of cellulosic biomass. Catalyzes the last step releasing glucose from the inhibitory cellobiose. The chain is Probable beta-glucosidase A (bglA) from Aspergillus terreus (strain NIH 2624 / FGSC A1156).